The chain runs to 469 residues: Probable Xaa-Pro aminopeptidase PEPP (469 aa).

Positions 264, 275, 398, and 438 each coordinate Mn(2+).

The protein belongs to the peptidase M24B family. Mn(2+) is required as a cofactor.

The catalysed reaction is Release of any N-terminal amino acid, including proline, that is linked to proline, even from a dipeptide or tripeptide.. Its function is as follows. Catalyzes the removal of a penultimate prolyl residue from the N-termini of peptides. In Ajellomyces capsulatus (strain H143) (Darling's disease fungus), this protein is Probable Xaa-Pro aminopeptidase PEPP (PEPP).